We begin with the raw amino-acid sequence, 420 residues long: Tryptophan synthase beta chain (420 aa).

Lys-99 is modified (N6-(pyridoxal phosphate)lysine).

This sequence belongs to the TrpB family. Tetramer of two alpha and two beta chains. Pyridoxal 5'-phosphate serves as cofactor.

It catalyses the reaction (1S,2R)-1-C-(indol-3-yl)glycerol 3-phosphate + L-serine = D-glyceraldehyde 3-phosphate + L-tryptophan + H2O. It functions in the pathway amino-acid biosynthesis; L-tryptophan biosynthesis; L-tryptophan from chorismate: step 5/5. Its function is as follows. The beta subunit is responsible for the synthesis of L-tryptophan from indole and L-serine. The sequence is that of Tryptophan synthase beta chain from Helicobacter hepaticus (strain ATCC 51449 / 3B1).